We begin with the raw amino-acid sequence, 176 residues long: Ribosome maturation factor RimM (176 aa).

Residues 97 to 176 (GDEFYWRELV…TIQVDWDPSF (80 aa)) form the PRC barrel domain.

This sequence belongs to the RimM family. In terms of assembly, binds ribosomal protein uS19.

The protein localises to the cytoplasm. In terms of biological role, an accessory protein needed during the final step in the assembly of 30S ribosomal subunit, possibly for assembly of the head region. Essential for efficient processing of 16S rRNA. May be needed both before and after RbfA during the maturation of 16S rRNA. It has affinity for free ribosomal 30S subunits but not for 70S ribosomes. The polypeptide is Ribosome maturation factor RimM (Pseudoalteromonas atlantica (strain T6c / ATCC BAA-1087)).